Here is a 327-residue protein sequence, read N- to C-terminus: 2-methoxy-6-polyprenyl-1,4-benzoquinol methylase, mitochondrial (327 aa).

The N-terminal 42 residues, 1–42 (MAAPGSCALWSYCGRGWSRAMRGCQLLGLRSSWPGDLLSARL), are a transit peptide targeting the mitochondrion. S-adenosyl-L-methionine is bound by residues Thr-117, Asp-171, and 199–200 (DA).

This sequence belongs to the class I-like SAM-binding methyltransferase superfamily. MenG/UbiE family. As to quaternary structure, component of a multi-subunit COQ enzyme complex, composed of at least COQ3, COQ4, COQ5, COQ6, COQ7 and COQ9. Interacts with PYURF; the interaction is direct, stabilizes COQ5 protein and associates PYURF with COQ enzyme complex. Widely expressed, with highest levels in liver, lung, placenta and skeletal muscle.

The protein resides in the mitochondrion inner membrane. The enzyme catalyses 2-methoxy-6-(all-trans-decaprenyl)benzene-1,4-diol + S-adenosyl-L-methionine = 5-methoxy-2-methyl-3-(all-trans-decaprenyl)benzene-1,4-diol + S-adenosyl-L-homocysteine + H(+). Its pathway is cofactor biosynthesis; ubiquinone biosynthesis. Methyltransferase required for the conversion of 2-decaprenyl-6-methoxy-1,4-benzoquinol (DDMQH2) to 2-decaprenyl-3-methyl-6-methoxy-1,4-benzoquinol (DMQH2). The protein is 2-methoxy-6-polyprenyl-1,4-benzoquinol methylase, mitochondrial of Homo sapiens (Human).